A 416-amino-acid chain; its full sequence is Gamma-glutamyl phosphate reductase (416 aa).

It belongs to the gamma-glutamyl phosphate reductase family.

It localises to the cytoplasm. It carries out the reaction L-glutamate 5-semialdehyde + phosphate + NADP(+) = L-glutamyl 5-phosphate + NADPH + H(+). It functions in the pathway amino-acid biosynthesis; L-proline biosynthesis; L-glutamate 5-semialdehyde from L-glutamate: step 2/2. Its function is as follows. Catalyzes the NADPH-dependent reduction of L-glutamate 5-phosphate into L-glutamate 5-semialdehyde and phosphate. The product spontaneously undergoes cyclization to form 1-pyrroline-5-carboxylate. This chain is Gamma-glutamyl phosphate reductase, found in Petrotoga mobilis (strain DSM 10674 / SJ95).